Consider the following 1388-residue polypeptide: DNA-directed RNA polymerase subunit beta (1388 aa).

It belongs to the RNA polymerase beta chain family. The RNAP catalytic core consists of 2 alpha, 1 beta, 1 beta' and 1 omega subunit. When a sigma factor is associated with the core the holoenzyme is formed, which can initiate transcription.

The enzyme catalyses RNA(n) + a ribonucleoside 5'-triphosphate = RNA(n+1) + diphosphate. In terms of biological role, DNA-dependent RNA polymerase catalyzes the transcription of DNA into RNA using the four ribonucleoside triphosphates as substrates. This chain is DNA-directed RNA polymerase subunit beta, found in Xylella fastidiosa (strain 9a5c).